Reading from the N-terminus, the 331-residue chain is Laforin (331 aa).

Residues methionine 1–leucine 124 form the CBM20 domain. The residue at position 25 (serine 25) is a Phosphoserine; by AMPK. Substrate-binding positions include tryptophan 32, lysine 87, glycine 103–aspartate 107, aspartate 197, aspartate 235, and arginine 241. One can recognise a Tyrosine-protein phosphatase domain in the interval histidine 156–lysine 323. The active-site Phosphocysteine intermediate is cysteine 266. The Glucan phosphatase signature motif CXAGXGR motif lies at cysteine 266 to arginine 272. Substrate-binding positions include asparagine 267–arginine 272 and tyrosine 304.

Belongs to the protein-tyrosine phosphatase family. Homodimer. Interacts with itself. Interacts with PPP1R3B, PPP1R3C, PPP1R3D, HIRIP5, and EPM2AIP1. Binds glycogen and Lafora bodies. Interacts with NHLRC1/malin (via the NHL repeats). Forms a complex with NHLRC1/malin and HSP70. Interacts with PPP1R3D; in the presence of NHLC1/malin the interaction leads to ubiquitination and autophagic degradation of PPP1R3D. Interacts (via the phosphatase domain) with MAPT/Tau; the interaction dephosphorylates MAPT. Interacts with PRDM8. Polyubiquitinated by NHLRC1/malin. Post-translationally, phosphorylation on Ser-25 by AMPK affects the phosphatase activity of the enzyme and its ability to homodimerize and interact with NHLRC1, PPP1R3C or PRKAA2. In terms of tissue distribution, widely expressed.

It is found in the cytoplasm. It localises to the endoplasmic reticulum membrane. Its subcellular location is the cell membrane. It carries out the reaction O-phospho-L-tyrosyl-[protein] + H2O = L-tyrosyl-[protein] + phosphate. The catalysed reaction is O-phospho-L-seryl-[protein] + H2O = L-seryl-[protein] + phosphate. The enzyme catalyses O-phospho-L-threonyl-[protein] + H2O = L-threonyl-[protein] + phosphate. Functionally, plays an important role in preventing glycogen hyperphosphorylation and the formation of insoluble aggregates, via its activity as glycogen phosphatase, and by promoting the ubiquitination of proteins involved in glycogen metabolism via its interaction with the E3 ubiquitin ligase NHLRC1/malin. Dephosphorylates phosphotyrosine and synthetic substrates, such as para-nitrophenylphosphate (pNPP), and has low activity with phosphoserine and phosphothreonine substrates (in vitro). Has also been shown to dephosphorylate MAPT. Shows strong phosphatase activity towards complex carbohydrates in vitro, avoiding glycogen hyperphosphorylation which is associated with reduced branching and formation of insoluble aggregates. Forms a complex with NHLRC1/malin and HSP70, which suppresses the cellular toxicity of misfolded proteins by promoting their degradation through the ubiquitin-proteasome system (UPS). Acts as a scaffold protein to facilitate PPP1R3C/PTG ubiquitination by NHLRC1/malin. Also promotes proteasome-independent protein degradation through the macroautophagy pathway. This is Laforin (Epm2a) from Rattus norvegicus (Rat).